The following is a 200-amino-acid chain: MELTEKSRPRIGVMGGTFDPIHHGHLVAASEVAQSFDLDEVVFVPTGRPWQKGAVTPAEHRYLMTVIATASNPRFTVSRVDVDRIGPTYTIDTLRDLHEERPEAELFFITGADAIAQILSWRDVEELWKLAHFVAVSRPGHDLSISGLPQQDVSLLEVPALAISSTDCRDRVNRGMPVWYLVPDGVVQYISKHHLYRSVA.

Belongs to the NadD family.

The enzyme catalyses nicotinate beta-D-ribonucleotide + ATP + H(+) = deamido-NAD(+) + diphosphate. It participates in cofactor biosynthesis; NAD(+) biosynthesis; deamido-NAD(+) from nicotinate D-ribonucleotide: step 1/1. Catalyzes the reversible adenylation of nicotinate mononucleotide (NaMN) to nicotinic acid adenine dinucleotide (NaAD). The polypeptide is Probable nicotinate-nucleotide adenylyltransferase (Leifsonia xyli subsp. xyli (strain CTCB07)).